The following is a 255-amino-acid chain: Cytochrome c oxidase subunit 3 (255 aa).

7 helical membrane-spanning segments follow: residues I12 to L29, L57 to I77, I91 to F111, L126 to I146, Y155 to F175, F196 to M216, and G235 to L255.

This sequence belongs to the cytochrome c oxidase subunit 3 family. Component of the cytochrome c oxidase (complex IV, CIV), a multisubunit enzyme composed of a catalytic core of 3 subunits and several supernumerary subunits. The complex exists as a monomer or a dimer and forms supercomplexes (SCs) in the inner mitochondrial membrane with ubiquinol-cytochrome c oxidoreductase (cytochrome b-c1 complex, complex III, CIII).

The protein resides in the mitochondrion inner membrane. The enzyme catalyses 4 Fe(II)-[cytochrome c] + O2 + 8 H(+)(in) = 4 Fe(III)-[cytochrome c] + 2 H2O + 4 H(+)(out). Its function is as follows. Component of the cytochrome c oxidase, the last enzyme in the mitochondrial electron transport chain which drives oxidative phosphorylation. The respiratory chain contains 3 multisubunit complexes succinate dehydrogenase (complex II, CII), ubiquinol-cytochrome c oxidoreductase (cytochrome b-c1 complex, complex III, CIII) and cytochrome c oxidase (complex IV, CIV), that cooperate to transfer electrons derived from NADH and succinate to molecular oxygen, creating an electrochemical gradient over the inner membrane that drives transmembrane transport and the ATP synthase. Cytochrome c oxidase is the component of the respiratory chain that catalyzes the reduction of oxygen to water. Electrons originating from reduced cytochrome c in the intermembrane space (IMS) are transferred via the dinuclear copper A center (CU(A)) of subunit 2 and heme A of subunit 1 to the active site in subunit 1, a binuclear center (BNC) formed by heme A3 and copper B (CU(B)). The BNC reduces molecular oxygen to 2 water molecules using 4 electrons from cytochrome c in the IMS and 4 protons from the mitochondrial matrix. The polypeptide is Cytochrome c oxidase subunit 3 (MT-CO3) (Theileria annulata).